We begin with the raw amino-acid sequence, 212 residues long: Eukaryotic translation initiation factor 4E-4 (212 aa).

A disulfide bond links cysteine 143 and cysteine 147.

Belongs to the eukaryotic initiation factor 4E family. In terms of assembly, eIF4F is a multi-subunit complex, the composition of which varies with external and internal environmental conditions. It is composed of at least eIF4A, eIF4E and eIF4G. eIF4E is also known to interact with other partners. Enriched in somatic cells.

Its function is as follows. Recognizes and binds the 7-methylguanosine-containing mRNA cap during an early step in the initiation of protein synthesis and facilitates ribosome binding by inducing the unwinding of the mRNAs secondary structures. All 5 eIF4E proteins bind monomethyl cap structures. Only ife-1, ife-2 and ife-5 bind trimethyl cap structures which result from trans-splicing. Translation of trimethyl cap structure mRNAs may be regulated by intracellular redox state; disulfide bonds change the width and depth of the cap-binding cavity determining selectivity to mRNA caps. The polypeptide is Eukaryotic translation initiation factor 4E-4 (ife-4) (Caenorhabditis elegans).